Consider the following 256-residue polypeptide: Imidazole glycerol phosphate synthase subunit HisF (256 aa).

Catalysis depends on residues aspartate 12 and aspartate 131.

The protein belongs to the HisA/HisF family. Heterodimer of HisH and HisF.

It localises to the cytoplasm. The catalysed reaction is 5-[(5-phospho-1-deoxy-D-ribulos-1-ylimino)methylamino]-1-(5-phospho-beta-D-ribosyl)imidazole-4-carboxamide + L-glutamine = D-erythro-1-(imidazol-4-yl)glycerol 3-phosphate + 5-amino-1-(5-phospho-beta-D-ribosyl)imidazole-4-carboxamide + L-glutamate + H(+). Its pathway is amino-acid biosynthesis; L-histidine biosynthesis; L-histidine from 5-phospho-alpha-D-ribose 1-diphosphate: step 5/9. In terms of biological role, IGPS catalyzes the conversion of PRFAR and glutamine to IGP, AICAR and glutamate. The HisF subunit catalyzes the cyclization activity that produces IGP and AICAR from PRFAR using the ammonia provided by the HisH subunit. This is Imidazole glycerol phosphate synthase subunit HisF from Ectopseudomonas mendocina (strain ymp) (Pseudomonas mendocina).